Reading from the N-terminus, the 469-residue chain is Probable indole-3-acetic acid-amido synthetase GH3.13 (469 aa).

Positions 1 to 26 (MTSTSSENAPDHDHDHDASSPAPATA) are disordered. The segment covering 9 to 18 (APDHDHDHDA) has biased composition (basic and acidic residues).

It belongs to the IAA-amido conjugating enzyme family.

In terms of biological role, may catalyze the synthesis of indole-3-acetic acid (IAA)-amino acid conjugates, providing a mechanism for the plant to cope with the presence of excess auxin. This chain is Probable indole-3-acetic acid-amido synthetase GH3.13 (GH3.13), found in Oryza sativa subsp. japonica (Rice).